The following is a 473-amino-acid chain: Cell division protein FtsP (473 aa).

The tat-type signal signal peptide spans 1 to 27; sequence MSLSRRQFIQASGLAMCLGALPFAVQA.

This sequence belongs to the FtsP family. Post-translationally, predicted to be exported by the Tat system. The position of the signal peptide cleavage has not been experimentally proven.

The protein resides in the periplasm. Its function is as follows. Cell division protein that is required for growth during stress conditions. May be involved in protecting or stabilizing the divisomal assembly under conditions of stress. The protein is Cell division protein FtsP of Xenorhabdus nematophila (strain ATCC 19061 / DSM 3370 / CCUG 14189 / LMG 1036 / NCIMB 9965 / AN6).